The following is a 391-amino-acid chain: Chalcone synthase 2 (391 aa).

Residue C164 is part of the active site.

The protein belongs to the thiolase-like superfamily. Chalcone/stilbene synthases family.

It carries out the reaction (E)-4-coumaroyl-CoA + 3 malonyl-CoA + 3 H(+) = 2',4,4',6'-tetrahydroxychalcone + 3 CO2 + 4 CoA. The protein operates within secondary metabolite biosynthesis; flavonoid biosynthesis. The primary product of this enzyme is 4,2',4',6'-tetrahydroxychalcone (also termed naringenin-chalcone or chalcone) which can under specific conditions spontaneously isomerize into naringenin. This chain is Chalcone synthase 2 (CHS2), found in Citrus sinensis (Sweet orange).